Here is a 654-residue protein sequence, read N- to C-terminus: Threonine--tRNA ligase (654 aa).

The TGS domain occupies 1 to 63 (MAQISLTFPD…DADASIAIHT (63 aa)). Residues 247–544 (DHRKLGREMN…LIENFAGKLP (298 aa)) are catalytic. 3 residues coordinate Zn(2+): cysteine 344, histidine 395, and histidine 521.

This sequence belongs to the class-II aminoacyl-tRNA synthetase family. Homodimer. Zn(2+) serves as cofactor.

Its subcellular location is the cytoplasm. The catalysed reaction is tRNA(Thr) + L-threonine + ATP = L-threonyl-tRNA(Thr) + AMP + diphosphate + H(+). In terms of biological role, catalyzes the attachment of threonine to tRNA(Thr) in a two-step reaction: L-threonine is first activated by ATP to form Thr-AMP and then transferred to the acceptor end of tRNA(Thr). Also edits incorrectly charged L-seryl-tRNA(Thr). This chain is Threonine--tRNA ligase, found in Dinoroseobacter shibae (strain DSM 16493 / NCIMB 14021 / DFL 12).